We begin with the raw amino-acid sequence, 265 residues long: Mlc titration factor A (265 aa).

Positions 111, 148, 152, and 211 each coordinate Zn(2+).

This sequence belongs to the MtfA family. In terms of assembly, interacts with Mlc. The cofactor is Zn(2+).

It localises to the cytoplasm. Its function is as follows. Involved in the modulation of the activity of the glucose-phosphotransferase system (glucose-PTS). Interacts with the transcriptional repressor Mlc, preventing its interaction with DNA and leading to the modulation of expression of genes regulated by Mlc, including ptsG, which encodes the PTS system glucose-specific EIICB component. Functionally, shows zinc-dependent metallopeptidase activity. The chain is Mlc titration factor A from Klebsiella pneumoniae (strain 342).